The sequence spans 313 residues: HPr kinase/phosphorylase (313 aa).

Catalysis depends on residues H140 and K161. 155–162 (GNSGAGKS) serves as a coordination point for ATP. Residue S162 coordinates Mg(2+). The Proton acceptor; for phosphorylation activity. Proton donor; for dephosphorylation activity role is filled by D179. An important for the catalytic mechanism of both phosphorylation and dephosphorylation region spans residues 203-212 (IEVRGLGILN). E204 serves as a coordination point for Mg(2+). R246 is a catalytic residue. Residues 267 to 272 (PVAAGR) form an important for the catalytic mechanism of dephosphorylation region.

This sequence belongs to the HPrK/P family. Homohexamer. Mg(2+) serves as cofactor.

The catalysed reaction is [HPr protein]-L-serine + ATP = [HPr protein]-O-phospho-L-serine + ADP + H(+). It carries out the reaction [HPr protein]-O-phospho-L-serine + phosphate + H(+) = [HPr protein]-L-serine + diphosphate. Its function is as follows. Catalyzes the ATP- as well as the pyrophosphate-dependent phosphorylation of a specific serine residue in HPr, a phosphocarrier protein of the phosphoenolpyruvate-dependent sugar phosphotransferase system (PTS). HprK/P also catalyzes the pyrophosphate-producing, inorganic phosphate-dependent dephosphorylation (phosphorolysis) of seryl-phosphorylated HPr (P-Ser-HPr). The sequence is that of HPr kinase/phosphorylase from Aromatoleum aromaticum (strain DSM 19018 / LMG 30748 / EbN1) (Azoarcus sp. (strain EbN1)).